A 396-amino-acid chain; its full sequence is METYDVLVVGGGPGGSTAARYAAKYGLKTLMIEKRPEIGSPVRCGEGLSKGILNEADIKADRSFIANEVKGARIYGPSEKRPIILQSEKAGNEVGYVLERDKFDKHLAALAAKAGADVWVKSPALGVIKENGKVAGAKIRHNNEIVDVRAKMVIAADGFESEFGRWAGLKSVILARNDIISALQYRMINVDVDPDYTDFYLGSIAPAGYIWVFPKGEGMANVGIGSSINWIHNRFELKNYLDRFIENHPGLKKGQDIQLVTGGVSVSKVKMPITMPGLMLVGDAARLIDPITGGGIANAIVSGMYAAQVTKEAIESNDYSPQMMQKYEKLIKERFERKHLRNWVAKEKLAMLSDDTLDKLVDIVSEQVLTTISVEAILKAIAEKYPEVVKELEDLI.

The FAD site is built by G14, E33, C44, G45, G47, R100, A124, E162, D283, G295, and I296. K338 and V374 together coordinate a 2,3-bis-O-(geranylgeranyl)-sn-glycerol 1-phospholipid.

Belongs to the geranylgeranyl reductase family. DGGGPL reductase subfamily. In terms of assembly, monomer. It depends on FAD as a cofactor.

The protein resides in the cell membrane. The catalysed reaction is 2,3-bis-O-(phytanyl)-sn-glycerol 1-phosphate + 8 NADP(+) = 2,3-bis-O-(geranylgeranyl)-sn-glycerol 1-phosphate + 8 NADPH + 8 H(+). It carries out the reaction 2,3-bis-O-(phytanyl)-sn-glycerol 1-phosphate + 8 NAD(+) = 2,3-bis-O-(geranylgeranyl)-sn-glycerol 1-phosphate + 8 NADH + 8 H(+). The enzyme catalyses a 2,3-bis-O-phytanyl-sn-glycerol 1-phospholipid + 8 A = a 2,3-bis-O-(geranylgeranyl)-sn-glycerol 1-phospholipid + 8 AH2. It catalyses the reaction CDP-2,3-bis-O-(geranylgeranyl)-sn-glycerol + 8 AH2 = CDP-2,3-bis-O-(phytanyl)-sn-glycerol + 8 A. The catalysed reaction is archaetidylserine + 8 AH2 = 2,3-bis-O-phytanyl-sn-glycero-3-phospho-L-serine + 8 A. It functions in the pathway membrane lipid metabolism; glycerophospholipid metabolism. Functionally, is involved in the reduction of 2,3-digeranylgeranylglycerophospholipids (unsaturated archaeols) into 2,3-diphytanylglycerophospholipids (saturated archaeols) in the biosynthesis of archaeal membrane lipids. Catalyzes the formation of archaetidic acid (2,3-di-O-phytanyl-sn-glyceryl phosphate) from 2,3-di-O-geranylgeranylglyceryl phosphate (DGGGP) via the hydrogenation of each double bond of the isoprenoid chains. Can use both NADH and NADPH as electron donors. Also catalyzes the reduction of 2,3-di-O-geranylgeranylglyceryl phosphate analogs such as 2,3-di-O-phytyl-sn-glyceryl phosphate (DPHGP), 3-O-(2,3-di-O-phytyl-sn-glycero-phospho)-sn-glycerol (DPHGPG) and 2,3-di-O-phytyl-sn-glycero-phosphoethanolamine (DPHGPE). Is not active toward 2,3-di-O-geranylgeranylglycerol. Is also probably able to reduce double bonds of geranyl groups in CDP-2,3-bis-O-(geranylgeranyl)-sn-glycerol and archaetidylserine, thus acting at various stages in the biosynthesis of archaeal membrane lipids. The chain is Digeranylgeranylglycerophospholipid reductase from Thermoplasma acidophilum (strain ATCC 25905 / DSM 1728 / JCM 9062 / NBRC 15155 / AMRC-C165).